We begin with the raw amino-acid sequence, 122 residues long: Large ribosomal subunit protein bL12 (122 aa).

Belongs to the bacterial ribosomal protein bL12 family. In terms of assembly, homodimer. Part of the ribosomal stalk of the 50S ribosomal subunit. Forms a multimeric L10(L12)X complex, where L10 forms an elongated spine to which 2 to 4 L12 dimers bind in a sequential fashion. Binds GTP-bound translation factors.

Functionally, forms part of the ribosomal stalk which helps the ribosome interact with GTP-bound translation factors. Is thus essential for accurate translation. This is Large ribosomal subunit protein bL12 from Buchnera aphidicola subsp. Baizongia pistaciae (strain Bp).